A 174-amino-acid polypeptide reads, in one-letter code: Endoribonuclease YbeY (174 aa).

Residues His129, His133, and His139 each contribute to the Zn(2+) site.

The protein belongs to the endoribonuclease YbeY family. Zn(2+) is required as a cofactor.

The protein resides in the cytoplasm. Its function is as follows. Single strand-specific metallo-endoribonuclease involved in late-stage 70S ribosome quality control and in maturation of the 3' terminus of the 16S rRNA. This chain is Endoribonuclease YbeY, found in Lactobacillus delbrueckii subsp. bulgaricus (strain ATCC BAA-365 / Lb-18).